Consider the following 89-residue polypeptide: Small ribosomal subunit protein uS15 (89 aa).

Belongs to the universal ribosomal protein uS15 family. In terms of assembly, part of the 30S ribosomal subunit. Forms a bridge to the 50S subunit in the 70S ribosome, contacting the 23S rRNA.

In terms of biological role, one of the primary rRNA binding proteins, it binds directly to 16S rRNA where it helps nucleate assembly of the platform of the 30S subunit by binding and bridging several RNA helices of the 16S rRNA. Its function is as follows. Forms an intersubunit bridge (bridge B4) with the 23S rRNA of the 50S subunit in the ribosome. This is Small ribosomal subunit protein uS15 from Shewanella baltica (strain OS185).